A 98-amino-acid polypeptide reads, in one-letter code: NADH-ubiquinone oxidoreductase chain 4L (98 aa).

The next 3 helical transmembrane spans lie at 1-21 (MSLV…GLLM), 29-49 (SLLC…LIIL), and 61-81 (IILL…LVMV).

It belongs to the complex I subunit 4L family. In terms of assembly, core subunit of respiratory chain NADH dehydrogenase (Complex I) which is composed of 45 different subunits.

It is found in the mitochondrion inner membrane. It carries out the reaction a ubiquinone + NADH + 5 H(+)(in) = a ubiquinol + NAD(+) + 4 H(+)(out). Core subunit of the mitochondrial membrane respiratory chain NADH dehydrogenase (Complex I) which catalyzes electron transfer from NADH through the respiratory chain, using ubiquinone as an electron acceptor. Part of the enzyme membrane arm which is embedded in the lipid bilayer and involved in proton translocation. This is NADH-ubiquinone oxidoreductase chain 4L (MT-ND4L) from Hippopotamus amphibius (Hippopotamus).